Consider the following 473-residue polypeptide: Beta-secretase 1 (473 aa).

Residues 1–21 (MAPALPWLLLWVGSGVLPVHG) form the signal peptide. Positions 22-45 (TQDGIRLPLRSGLAGAPLGLRLPR) are excised as a propeptide. The Extracellular segment spans residues 22–429 (TQDGIRLPLR…PQTDESTLMT (408 aa)). The Peptidase A1 domain maps to 72–388 (YYVEMTVGSP…DRARKRIGFA (317 aa)). Asp-90 is an active-site residue. Lys-123 carries the N6-acetyllysine modification. N-linked (GlcNAc...) asparagine glycans are attached at residues Asn-150, Asn-169, and Asn-195. 3 cysteine pairs are disulfide-bonded: Cys-188–Cys-392, Cys-250–Cys-415, and Cys-302–Cys-352. 3 positions are modified to N6-acetyllysine: Lys-247, Lys-251, and Lys-257. Residue Asp-261 is part of the active site. Lys-271, Lys-272, and Lys-279 each carry N6-acetyllysine. N-linked (GlcNAc...) asparagine glycosylation is present at Asn-326. The chain crosses the membrane as a helical span at residues 430-450 (IAYVMAAICALFMLPLCLMVC). S-palmitoyl cysteine attachment occurs at residues Cys-446, Cys-450, Cys-454, and Cys-457. Residues 451-473 (QWRCLRCLRHQHDDFADDISLLK) lie on the Cytoplasmic side of the membrane. The tract at residues 451–473 (QWRCLRCLRHQHDDFADDISLLK) is interaction with RTN3. A DXXLL motif is present at residues 468-472 (DISLL). Ser-470 carries the post-translational modification Phosphoserine. A Glycyl lysine isopeptide (Lys-Gly) (interchain with G-Cter in ubiquitin) cross-link involves residue Lys-473.

Belongs to the peptidase A1 family. Monomer. Interacts (via DXXLL motif) with GGA1, GGA2 and GGA3 (via their VHS domain); the interaction highly increases when BACE1 is phosphorylated at Ser-470. Interacts with RTN1; RTN2; RTN3 and RTN4; the interaction leads to inhibition of amyloid precursor protein processing. Interacts with SNX6. Interacts with PCSK9. Interacts with NAT8 and NAT8B. Interacts with BIN1. Interacts (via extracellular domain) with ADAM10 (via extracellular domain). Interacts with SORL1; this interaction may affect binding with APP and hence reduce APP cleavage. Interacts with NRDC AND NRG1. Post-translationally, palmitoylation mediates lipid raft localization. Acetylated in the endoplasmic reticulum at Lys-123, Lys-247, Lys-251, Lys-257, Lys-271, Lys-272, and Lys-279. Acetylation by NAT8 and NAT8B is transient and deacetylation probably occurs in the Golgi. Acetylation regulates the maturation, the transport to the plasma membrane, the stability and the expression of the protein. In terms of processing, ubiquitinated at Lys-473, ubiquitination leads to lysosomal degradation. Monoubiquitinated and 'Lys-63'-linked polyubitinated. Deubiquitnated by USP8; inhibits lysosomal degradation. Post-translationally, phosphorylation at Ser-470 is required for interaction with GGA1 and retrograded transport from endosomal compartments to the trans-Golgi network. Non-phosphorylated BACE1 enters a direct recycling route to the cell surface. N-Glycosylated. Addition of a bisecting N-acetylglucosamine by MGAT3 blocks lysosomal targeting, further degradation and is required for maintaining stability under stress conditions.

The protein localises to the cell membrane. The protein resides in the golgi apparatus. Its subcellular location is the trans-Golgi network. It is found in the endoplasmic reticulum. It localises to the endosome. The protein localises to the cell surface. The protein resides in the cytoplasmic vesicle membrane. Its subcellular location is the membrane raft. It is found in the lysosome. It localises to the late endosome. The protein localises to the early endosome. The protein resides in the recycling endosome. Its subcellular location is the cell projection. It is found in the axon. It localises to the dendrite. The enzyme catalyses Broad endopeptidase specificity. Cleaves Glu-Val-Asn-Leu-|-Asp-Ala-Glu-Phe in the Swedish variant of Alzheimer's amyloid precursor protein.. Its activity is regulated as follows. Inhibited by RTN3 and RTN4. Functionally, responsible for the proteolytic processing of the amyloid precursor protein (APP). Cleaves at the N-terminus of the A-beta peptide sequence, between residues 671 and 672 of APP, leads to the generation and extracellular release of beta-cleaved soluble APP, and a corresponding cell-associated C-terminal fragment which is later released by gamma-secretase. Cleaves CHL1. The sequence is that of Beta-secretase 1 (BACE1) from Cavia porcellus (Guinea pig).